We begin with the raw amino-acid sequence, 291 residues long: MITLAVDIGGTKISAALISDDGSFLLKKQISTPHERCPDEMTGALRLLVSEMKGTAERFAVASTGIINNGVLTALNPDNLGGLKEYPLKNIMEDITGLNGSVINDAQAAAWAEYTVLPKEICDMVFITVSTGVGGGIVVNRKLLTGVSGLAGHVGHILSGVTDTECGCGRRGCVEAVSSGRAIMGAAKNKLAGYSTKYIFELARQGYKEAEFLTERSASTIAELIVSLKLLLDCQVVVVGGSVGLADGYVQKVSKHLSIYSEICNVMLFPAYFRSDSGLIGATLWDRDCIT.

ATP-binding positions include 5 to 12 and 132 to 139; these read AVDIGGTK and GVGGGIVV. Residues His-156, Cys-166, Cys-168, and Cys-173 each contribute to the Zn(2+) site.

This sequence belongs to the ROK (NagC/XylR) family. NanK subfamily. As to quaternary structure, homodimer.

It catalyses the reaction an N-acyl-D-mannosamine + ATP = an N-acyl-D-mannosamine 6-phosphate + ADP + H(+). It functions in the pathway amino-sugar metabolism; N-acetylneuraminate degradation; D-fructose 6-phosphate from N-acetylneuraminate: step 2/5. Catalyzes the phosphorylation of N-acetylmannosamine (ManNAc) to ManNAc-6-P. The polypeptide is N-acetylmannosamine kinase (nanK2) (Escherichia coli O6:H1 (strain CFT073 / ATCC 700928 / UPEC)).